We begin with the raw amino-acid sequence, 102 residues long: Serum amyloid A-5 protein (102 aa).

Residues 68–102 (GRGHEDSMADQEANRWGRSGNDPNHYRPAGLPDKY) form a disordered region. The segment covering 69–82 (RGHEDSMADQEANR) has biased composition (basic and acidic residues).

It belongs to the SAA family. In terms of tissue distribution, expressed by the liver; secreted in plasma.

The protein localises to the secreted. Functionally, major acute phase reactant. Apolipoprotein of the HDL complex. The protein is Serum amyloid A-5 protein of Mesocricetus auratus (Golden hamster).